Here is a 263-residue protein sequence, read N- to C-terminus: Interleukin-22 receptor subunit alpha-2 (263 aa).

Positions 1–21 (MMPKHCFLGFLISFFLTGVAG) are cleaved as a signal peptide. Fibronectin type-III domains follow at residues 26–68 (HESL…KIMF), 100–161 (GQRQ…TKID), and 162–263 (PPVM…VEIP). Asparagine 56 carries an N-linked (GlcNAc...) asparagine glycan. Cysteine 110 and cysteine 118 are oxidised to a cystine. 4 N-linked (GlcNAc...) asparagine glycosylation sites follow: asparagine 166, asparagine 171, asparagine 192, and asparagine 209. Cysteine 238 and cysteine 259 are disulfide-bonded.

Belongs to the type II cytokine receptor family. As to expression, expressed in placenta, spleen, breast, skin and lung. Also detected in intestinal tract, testis, brain, heart and thymus. No expression found in prostate, bladder, kidney, ovary, muscle, bone marrow, liver and uterus. Isoform 1 is expressed only in placenta. Isoform 2 is expressed in placenta and breast and at lower level in spleen, skin, thymus and stomach.

Its subcellular location is the secreted. Isoform 2 is a receptor for IL22. Binds to IL22, prevents interaction with the functional IL-22R complex and blocks the activity of IL22 (in vitro). May play an important role as an IL22 antagonist in the regulation of inflammatory responses. Functionally, isoform 1 may play a role in establishing and maintaining successful pregnancy. In Homo sapiens (Human), this protein is Interleukin-22 receptor subunit alpha-2 (IL22RA2).